A 412-amino-acid chain; its full sequence is Double C2-like domain-containing protein beta (412 aa).

The tract at residues 1-36 (MTLRRRGEKATISIQEHMAIDVCPGPIRPIKQISDY) is negatively regulates targeting to plasma membrane. Residues 1–90 (MTLRRRGEKA…EDVDQLFGAY (90 aa)) form a mediates interaction with DYNLT1 region. The interval 38-123 (PRFPRGLPPD…PDADGYESDD (86 aa)) is disordered. The span at 49-70 (GPRAAAPPDAPARPAVAGAGRR) shows a compositional bias: low complexity. A compositionally biased stretch (pro residues) spans 95-108 (GPSPGPSPARPPAK). The segment covering 112-123 (DEPDADGYESDD) has biased composition (acidic residues). C2 domains lie at 126–250 (ALGT…SICL) and 266–399 (ERGR…ERWH). Ca(2+) is bound by residues Asp-157, Asp-163, Asp-218, Asp-220, Asp-297, Asp-303, Asp-357, Asp-359, and Asp-365. Positions 257 to 375 (DKTEDKSLEE…FIGGVVLGIH (119 aa)) are mediates interaction with STXBP3. Ser-411 bears the Phosphoserine mark.

As to quaternary structure, interacts with the SNARE (soluble N-ethylmaleimide-sensitive factor attached protein receptor) complex composed of SNAP25, STX1A and VAMP2; the interaction is calcium-dependent and competitive with SYT1. Interacts with STX4; the interaction is calcium-dependent, increased by insulin and glucose, and mediates vesicle fusion with plasma membrane in pancreatic cells and adipocytes. Interacts with STXBP3; the interaction is direct, occurs at the cell membrane and regulates glucose-stimulated insulin secretion. May interact with UNC13A; the interaction mediates targeting to the plasma membrane. Interacts with cytoplasmic dynein light chain DYNLT1. Ca(2+) is required as a cofactor. Widely expressed with highest levels in brain and kidney. Expressed in pancreatic islet cells (at protein level).

Its subcellular location is the cytoplasm. It is found in the cytoplasmic granule. The protein localises to the cell membrane. Functionally, calcium sensor which positively regulates SNARE-dependent fusion of vesicles with membranes. Binds phospholipids in a calcium-dependent manner and may act at the priming stage of fusion by modifying membrane curvature to stimulate fusion. Involved in calcium-triggered exocytosis in chromaffin cells and calcium-dependent spontaneous release of neurotransmitter in absence of action potentials in neuronal cells. Involved both in glucose-stimulated insulin secretion in pancreatic cells and insulin-dependent GLUT4 transport to the plasma membrane in adipocytes. In Homo sapiens (Human), this protein is Double C2-like domain-containing protein beta.